Reading from the N-terminus, the 394-residue chain is Homoserine O-succinyltransferase (394 aa).

The AB hydrolase-1 domain maps to 54-368 (NAVLICHALS…SSPAGHDAFL (315 aa)). Residue Ser160 is the Nucleophile of the active site. Arg236 is a substrate binding site. Residues Asp331 and His364 contribute to the active site. Asp365 is a substrate binding site.

This sequence belongs to the AB hydrolase superfamily. MetX family. In terms of assembly, homodimer.

The protein resides in the cytoplasm. The catalysed reaction is L-homoserine + succinyl-CoA = O-succinyl-L-homoserine + CoA. It participates in amino-acid biosynthesis; L-methionine biosynthesis via de novo pathway; O-succinyl-L-homoserine from L-homoserine: step 1/1. Its function is as follows. Transfers a succinyl group from succinyl-CoA to L-homoserine, forming succinyl-L-homoserine. This Magnetococcus marinus (strain ATCC BAA-1437 / JCM 17883 / MC-1) protein is Homoserine O-succinyltransferase.